The sequence spans 688 residues: Potassium-transporting ATPase ATP-binding subunit (688 aa).

4 helical membrane-spanning segments follow: residues 34 to 54 (PVMF…LAIL), 62 to 82 (AMFT…ANMA), 219 to 239 (VALT…TATL), and 260 to 280 (VLVA…LSAI). The active-site 4-aspartylphosphate intermediate is aspartate 313. Residues aspartate 350, glutamate 354, 383–390 (FSAQTRMS), and lysine 401 each bind ATP. The Mg(2+) site is built by aspartate 524 and aspartate 528. 3 helical membrane-spanning segments follow: residues 594 to 614 (FAII…LNIM), 622 to 642 (AILS…PLAL), and 662 to 682 (IYGL…DLLL).

The protein belongs to the cation transport ATPase (P-type) (TC 3.A.3) family. Type IA subfamily. In terms of assembly, the system is composed of three essential subunits: KdpA, KdpB and KdpC.

The protein resides in the cell inner membrane. It carries out the reaction K(+)(out) + ATP + H2O = K(+)(in) + ADP + phosphate + H(+). Its function is as follows. Part of the high-affinity ATP-driven potassium transport (or Kdp) system, which catalyzes the hydrolysis of ATP coupled with the electrogenic transport of potassium into the cytoplasm. This subunit is responsible for energy coupling to the transport system and for the release of the potassium ions to the cytoplasm. In Yersinia pseudotuberculosis serotype O:1b (strain IP 31758), this protein is Potassium-transporting ATPase ATP-binding subunit.